The primary structure comprises 101 residues: Ubiquitin-related modifier 1 (101 aa).

The residue at position 101 (G101) is a 1-thioglycine. G101 participates in a covalent cross-link: Glycyl lysine isopeptide (Gly-Lys) (interchain with K-? in acceptor proteins).

Belongs to the URM1 family. Post-translationally, C-terminal thiocarboxylation occurs in 2 steps, it is first acyl-adenylated (-COAMP) via the hesA/moeB/thiF part of UBA4, then thiocarboxylated (-COSH) via the rhodanese domain of UBA4.

The protein localises to the cytoplasm. It functions in the pathway tRNA modification; 5-methoxycarbonylmethyl-2-thiouridine-tRNA biosynthesis. Acts as a sulfur carrier required for 2-thiolation of mcm(5)S(2)U at tRNA wobble positions of cytosolic tRNA(Lys), tRNA(Glu) and tRNA(Gln). Serves as sulfur donor in tRNA 2-thiolation reaction by being thiocarboxylated (-COSH) at its C-terminus by the MOCS3 homolog UBA4. The sulfur is then transferred to tRNA to form 2-thiolation of mcm(5)S(2)U. Prior mcm(5) tRNA modification by the elongator complex is required for 2-thiolation. Also acts as a ubiquitin-like protein (UBL) that is covalently conjugated via an isopeptide bond to lysine residues of target proteins such as AHP1. The thiocarboxylated form serves as substrate for conjugation and oxidative stress specifically induces the formation of UBL-protein conjugates. The sequence is that of Ubiquitin-related modifier 1 from Kluyveromyces lactis (strain ATCC 8585 / CBS 2359 / DSM 70799 / NBRC 1267 / NRRL Y-1140 / WM37) (Yeast).